We begin with the raw amino-acid sequence, 413 residues long: Paxillin homolog 1 (413 aa).

The span at 33 to 45 shows a compositional bias: basic and acidic residues; that stretch reads HISDRRSQSRDDF. The segment at 33 to 157 is disordered; it reads HISDRRSQSR…PLHSDSMIGT (125 aa). Positions 49–69 are enriched in polar residues; that stretch reads YDLQGNLNTQSVSNGNITTSP. The span at 73-92 shows a compositional bias: basic and acidic residues; that stretch reads RSSEGKDYSKSQERIYENES. The segment covering 118-143 has biased composition (polar residues); it reads ASSSRKSLGPPSQAQSYSDVRSNGRS. LIM zinc-binding domains lie at 174–232, 233–292, 293–350, and 351–410; these read GDCA…NQFS, PKCQ…LFAP, KCNG…ESRG, and SICS…TYAL.

This sequence belongs to the paxillin family. As to expression, isoform a: Expressed in all 95 body wall muscle cells as well as in the pharyngeal muscle cells (at protein level). Isoform c: Expressed in the body wall muscle cells and in the pharyngeal muscle cells.

It is found in the cell junction. The protein localises to the adherens junction. Its subcellular location is the cell membrane. It localises to the cytoplasm. The protein resides in the myofibril. It is found in the sarcomere. The protein localises to the m line. Its subcellular location is the cell projection. It localises to the podosome. Functionally, required for myofilament organization of the pharyngeal sarcomeres and for pharyngeal muscle contractions and hence for pharyngeal pumping. Together with lin-8, might be required for myofilament organization in the body wall muscles. This Caenorhabditis elegans protein is Paxillin homolog 1 (pxl-1).